Here is a 122-residue protein sequence, read N- to C-terminus: Glycine cleavage system H protein (122 aa).

Positions 22–103 (IGIIGISDYA…AFGSWFFKVE (82 aa)) constitute a Lipoyl-binding domain. K63 bears the N6-lipoyllysine mark.

Belongs to the GcvH family. As to quaternary structure, the glycine cleavage system is composed of four proteins: P, T, L and H. Requires (R)-lipoate as cofactor.

The glycine cleavage system catalyzes the degradation of glycine. The H protein shuttles the methylamine group of glycine from the P protein to the T protein. In Treponema denticola (strain ATCC 35405 / DSM 14222 / CIP 103919 / JCM 8153 / KCTC 15104), this protein is Glycine cleavage system H protein.